We begin with the raw amino-acid sequence, 429 residues long: Chaperone SurA (429 aa).

Residues 1-18 (MFKRIALVCALFSGVCFA) form the signal peptide. PpiC domains are found at residues 170–271 (NLTY…KLVA) and 281–380 (ITQT…EVIA).

Its subcellular location is the periplasm. The catalysed reaction is [protein]-peptidylproline (omega=180) = [protein]-peptidylproline (omega=0). Its function is as follows. Chaperone involved in the correct folding and assembly of outer membrane proteins. Recognizes specific patterns of aromatic residues and the orientation of their side chains, which are found more frequently in integral outer membrane proteins. May act in both early periplasmic and late outer membrane-associated steps of protein maturation. This Legionella pneumophila (strain Lens) protein is Chaperone SurA.